A 139-amino-acid chain; its full sequence is Succinate dehydrogenase assembly factor 2, mitochondrial (139 aa).

Residues 1 to 28 (MLRKTNLSNITTLLRSARCMNRMPQLRF) constitute a mitochondrion transit peptide.

It belongs to the SDHAF2 family. Interacts with the flavoprotein subunit within the SDH catalytic dimer.

The protein resides in the mitochondrion. It localises to the mitochondrion matrix. Functionally, plays an essential role in the assembly of succinate dehydrogenase (SDH), an enzyme complex (also referred to as respiratory complex II) that is a component of both the tricarboxylic acid (TCA) cycle and the mitochondrial electron transport chain, and which couples the oxidation of succinate to fumarate with the reduction of ubiquinone (coenzyme Q) to ubiquinol. Required for flavinylation (covalent attachment of FAD) of the flavoprotein subunit of the SDH catalytic dimer. The polypeptide is Succinate dehydrogenase assembly factor 2, mitochondrial (Schizosaccharomyces pombe (strain 972 / ATCC 24843) (Fission yeast)).